The chain runs to 294 residues: DNA replication complex GINS protein SLD5 (294 aa).

The protein belongs to the GINS4/SLD5 family. As to quaternary structure, component of the GINS complex which is a heterotetramer composed of SLD5, PSF1, PSF2 and PSF3. Interacts with PSF2.

It is found in the nucleus. Its function is as follows. Required for DNA replication. Functions as part of the GINS complex which plays an essential role in the initiation of DNA replication by binding to DNA replication origins and facilitating the assembly of the DNA replication machinery. The polypeptide is DNA replication complex GINS protein SLD5 (Saccharomyces cerevisiae (strain ATCC 204508 / S288c) (Baker's yeast)).